We begin with the raw amino-acid sequence, 1181 residues long: 1-phosphatidylinositol 4,5-bisphosphate phosphodiesterase beta-2 (1181 aa).

The 152-residue stretch at 312–463 (QDMTQPLNHY…LRGKILIKNK (152 aa)) folds into the PI-PLC X-box domain. His-327 is a catalytic residue. Residues Asn-328, Glu-357, and Asp-359 each coordinate Ca(2+). The active site involves His-374. Ca(2+) is bound at residue Glu-408. The tract at residues 465–534 (NQFSGPASPS…EEIKKMQSDE (70 aa)) is disordered. Acidic residues predominate over residues 503–525 (TEVEEEEVVEEEEEEESGNLDEE). The region spanning 547–663 (MSSLVNYIQP…GYLLKHEFMR (117 aa)) is the PI-PLC Y-box domain. Residues 666-791 (DKQFNPFSVD…CLRSESNMAL (126 aa)) form the C2 domain. The disordered stretch occupies residues 847–890 (SGTPVASQSNGAPVSAGNGSTAPGTKATGEEATKEVTEPQTASL). Polar residues predominate over residues 850-869 (PVASQSNGAPVSAGNGSTAP). Over residues 874–883 (TGEEATKEVT) the composition is skewed to basic and acidic residues. Residues 893 to 940 (LRELKGVVKLQRRHEKELRELERRGARRWEELLQRGAAQLAELQTQAA) adopt a coiled-coil conformation. Ser-950 is modified (phosphoserine). 2 coiled-coil regions span residues 974 to 1026 (PRVQ…AELK) and 1075 to 1141 (HIQE…VRAY). Positions 1149-1181 (EAEDKPERSCEASEESCPQEPLVSKADTQESRL) are disordered. A compositionally biased stretch (basic and acidic residues) spans 1150-1159 (AEDKPERSCE).

As to quaternary structure, interacts with RAC1. Forms a complex composed of at least WDR26, a G-beta:gamma unit, and PLCB2. The cofactor is Ca(2+).

The catalysed reaction is a 1,2-diacyl-sn-glycero-3-phospho-(1D-myo-inositol-4,5-bisphosphate) + H2O = 1D-myo-inositol 1,4,5-trisphosphate + a 1,2-diacyl-sn-glycerol + H(+). It carries out the reaction a 1,2-diacyl-sn-glycero-3-phospho-(1D-myo-inositol) + H2O = 1D-myo-inositol 1-phosphate + a 1,2-diacyl-sn-glycerol + H(+). The production of the second messenger molecules diacylglycerol (DAG) and inositol 1,4,5-trisphosphate (IP3) is mediated by activated phosphatidylinositol-specific phospholipase C enzymes. In neutrophils, participates in a phospholipase C-activating N-formyl peptide-activated GPCR (G protein-coupled receptor) signaling pathway by promoting RASGRP4 activation by DAG, to promote neutrophil functional responses. The chain is 1-phosphatidylinositol 4,5-bisphosphate phosphodiesterase beta-2 from Mus musculus (Mouse).